The sequence spans 324 residues: N-acetylmuramoyl-L-alanine amidase sle1 (324 aa).

The N-terminal stretch at 1–25 is a signal peptide; sequence MQKKYITAIIGTTALSALASTHAQA. LysM domains follow at residues 27–70, 84–127, and 147–190; these read TTHT…VLKV, TVYT…KLKV, and ATYT…KLKV. The Peptidase C51 domain maps to 200-324; sequence SNNTRSNGGY…YQVRNYKFIH (125 aa).

It localises to the secreted. Its subcellular location is the cell surface. It catalyses the reaction Hydrolyzes the link between N-acetylmuramoyl residues and L-amino acid residues in certain cell-wall glycopeptides.. In terms of biological role, peptidoglycan hydrolase involved in the splitting of the septum during cell division. The protein is N-acetylmuramoyl-L-alanine amidase sle1 (sle1) of Staphylococcus epidermidis (strain ATCC 12228 / FDA PCI 1200).